The chain runs to 221 residues: Vesicle-associated membrane protein 714 (221 aa).

An N-acetylalanine modification is found at Ala2. At 2–190 the chain is on the cytoplasmic side; the sequence is AIVYAVVARG…RRALWMKNAK (189 aa). A Longin domain is found at 7–112; the sequence is VVARGTVVLA…AMNDEFSRVL (106 aa). Positions 127-187 constitute a v-SNARE coiled-coil homology domain; that stretch reads TLNRVRGEVS…KRLRRALWMK (61 aa). The chain crosses the membrane as a helical; Anchor for type IV membrane protein span at residues 191 to 211; sequence LLVLLTCLIVFLLYIIIASFC. Residues 212–221 are Vesicular-facing; the sequence is GGITLPSCRS.

This sequence belongs to the synaptobrevin family. In terms of tissue distribution, highly expressed in leaves, stems and roots. Detected in flowers.

It is found in the golgi apparatus membrane. In terms of biological role, involved in the targeting and/or fusion of transport vesicles to their target membrane. This is Vesicle-associated membrane protein 714 from Arabidopsis thaliana (Mouse-ear cress).